A 237-amino-acid polypeptide reads, in one-letter code: UPF0758 protein Veis_1654 (237 aa).

The MPN domain maps to Val-115–Leu-237. Zn(2+)-binding residues include His-186, His-188, and Asp-199. The JAMM motif signature appears at His-186 to Asp-199.

The protein belongs to the UPF0758 family.

This chain is UPF0758 protein Veis_1654, found in Verminephrobacter eiseniae (strain EF01-2).